Consider the following 311-residue polypeptide: 4-hydroxyproline 2-epimerase (311 aa).

Cys-89 functions as the Proton acceptor in the catalytic mechanism. Residues Gly-90–His-91, His-209, and Asp-233 contribute to the substrate site. Cys-237 serves as the catalytic Proton donor. Substrate is bound at residue Gly-238–Thr-239.

The protein belongs to the proline racemase family.

It catalyses the reaction trans-4-hydroxy-L-proline = cis-4-hydroxy-D-proline. Its function is as follows. Catalyzes the epimerization of trans-4-hydroxy-L-proline (t4LHyp) to cis-4-hydroxy-D-proline (c4DHyp). Is likely involved in a degradation pathway that converts t4LHyp to alpha-ketoglutarate. Displays no proline racemase activity. This Burkholderia ambifaria (strain ATCC BAA-244 / DSM 16087 / CCUG 44356 / LMG 19182 / AMMD) (Burkholderia cepacia (strain AMMD)) protein is 4-hydroxyproline 2-epimerase.